The sequence spans 745 residues: 5-methyltetrahydropteroyltriglutamate--homocysteine methyltransferase (745 aa).

5-methyltetrahydropteroyltri-L-glutamate is bound by residues Lys-19 and Asn-115. Residues 420–422 (IGS) and Glu-473 each bind L-homocysteine. L-methionine-binding positions include 420 to 422 (IGS) and Glu-473. 5-methyltetrahydropteroyltri-L-glutamate-binding positions include Asp-478, Tyr-501, 504–505 (RA), and Trp-550. Asp-588 contacts L-homocysteine. Position 588 (Asp-588) interacts with L-methionine. 3 residues coordinate Zn(2+): His-630, Cys-632, and Glu-654. Residue His-683 is the Proton donor of the active site. Cys-715 contributes to the Zn(2+) binding site.

The protein belongs to the vitamin-B12 independent methionine synthase family. Requires Zn(2+) as cofactor.

It carries out the reaction 5-methyltetrahydropteroyltri-L-glutamate + L-homocysteine = tetrahydropteroyltri-L-glutamate + L-methionine. It participates in amino-acid biosynthesis; L-methionine biosynthesis via de novo pathway; L-methionine from L-homocysteine (MetE route): step 1/1. Catalyzes the transfer of a methyl group from 5-methyltetrahydrofolate to homocysteine resulting in methionine formation. This is 5-methyltetrahydropteroyltriglutamate--homocysteine methyltransferase from Streptococcus mutans serotype c (strain ATCC 700610 / UA159).